A 295-amino-acid polypeptide reads, in one-letter code: tRNA pseudouridine synthase B (295 aa).

Asp-42 serves as the catalytic Nucleophile.

The protein belongs to the pseudouridine synthase TruB family. Type 1 subfamily.

The catalysed reaction is uridine(55) in tRNA = pseudouridine(55) in tRNA. Its function is as follows. Responsible for synthesis of pseudouridine from uracil-55 in the psi GC loop of transfer RNAs. The chain is tRNA pseudouridine synthase B from Cutibacterium acnes (strain DSM 16379 / KPA171202) (Propionibacterium acnes).